A 129-amino-acid chain; its full sequence is Glycine cleavage system H protein (129 aa).

The 83-residue stretch at 24–106 (SYTVGITEHA…YGEGWFFRVM (83 aa)) folds into the Lipoyl-binding domain. K65 is modified (N6-lipoyllysine).

It belongs to the GcvH family. As to quaternary structure, the glycine cleavage system is composed of four proteins: P, T, L and H. It depends on (R)-lipoate as a cofactor.

In terms of biological role, the glycine cleavage system catalyzes the degradation of glycine. The H protein shuttles the methylamine group of glycine from the P protein to the T protein. This Shewanella baltica (strain OS185) protein is Glycine cleavage system H protein.